Here is a 446-residue protein sequence, read N- to C-terminus: C4-dicarboxylate transport protein 2 (446 aa).

Helical transmembrane passes span 7 to 26 (PLFGQVLIALALGIALGIWA), 46 to 64 (MLIAPIVFSVVVVGICGAG), 77 to 99 (VIYFEVVTTIALALGIALAYAFG), 152 to 171 (ILQVLLVSILFGCALSLLGE), 192 to 211 (AVVIRLAPLGVLGAVAFTVG), 221 to 243 (LGFLVLLFYAAVAVFVVVVLGGI), 291 to 313 (VVGLVIPTGYSFNLDAFSIYLTL), 318 to 340 (IAQATNTPLALSDLLLILGVALI), 353 to 375 (IVILAATLSVIPAIPAIGLVLVL), and 381 to 403 (IGIARALGNLLGNCVATVVIAAW).

Belongs to the dicarboxylate/amino acid:cation symporter (DAACS) (TC 2.A.23) family.

Its subcellular location is the cell inner membrane. Responsible for the transport of dicarboxylates such as succinate, fumarate, and malate from the periplasm across the membrane. The protein is C4-dicarboxylate transport protein 2 (dctA2) of Ralstonia nicotianae (strain ATCC BAA-1114 / GMI1000) (Ralstonia solanacearum).